A 155-amino-acid chain; its full sequence is Arginine repressor (155 aa).

It belongs to the ArgR family.

It localises to the cytoplasm. It participates in amino-acid biosynthesis; L-arginine biosynthesis [regulation]. Regulates arginine biosynthesis genes. The chain is Arginine repressor from Histophilus somni (strain 129Pt) (Haemophilus somnus).